A 368-amino-acid polypeptide reads, in one-letter code: Somatostatin receptor type 5 (368 aa).

Topologically, residues 1-45 (MEPLFPASPLTTWNTSSVVPSGSGDENGTLAGLGPSPGARAVVVP) are extracellular. 2 N-linked (GlcNAc...) asparagine glycosylation sites follow: asparagine 14 and asparagine 27. Residues 46–66 (VLYLLVCAVGLGGNTLVIYVV) traverse the membrane as a helical segment. Over 67–77 (LRHAKMKTVTN) the chain is Cytoplasmic. A helical membrane pass occupies residues 78–98 (IYILNLAVADVLLMLGLPFVA). The Extracellular portion of the chain corresponds to 99 to 115 (TQNAISYWPFGPVLCRL). Cysteine 113 and cysteine 188 are oxidised to a cystine. The helical transmembrane segment at 116-136 (VMTLDGINQFTSIFCLTVMSV) threads the bilayer. Residues 137–158 (DRYLAVVHPIRSARWRRPRVAK) are Cytoplasmic-facing. The chain crosses the membrane as a helical span at residues 159 to 179 (LASAAVWAFSLVMSLPLVVFA). The Extracellular portion of the chain corresponds to 180-207 (DIQEGWNTCNLSWPEPVGLWGAVFIIYT). N-linked (GlcNAc...) asparagine glycosylation is present at asparagine 189. A helical transmembrane segment spans residues 208–228 (SVLGFFGPLLVICLCYLLIVV). Residues 229 to 251 (KLKASGVRVGSTRRRSERKVTRM) lie on the Cytoplasmic side of the membrane. A helical membrane pass occupies residues 252 to 272 (VVVVVLVFAGCWLPFFIVNIV). The Extracellular portion of the chain corresponds to 273 to 286 (NLAFALPEEPASAG). The chain crosses the membrane as a helical span at residues 287-309 (AYFFVVVLSYANSCANPLLYGFL). Over 310–368 (SDNFRQSFRKVLCLRKGYGAGAEDADATEPQPGPSSRLQEAMMPVRSCKANGLMQTSKL) the chain is Cytoplasmic. The S-palmitoyl cysteine; by ZDHHC5 moiety is linked to residue cysteine 322.

The protein belongs to the G-protein coupled receptor 1 family. As to quaternary structure, heterodimer with SSTR2. Heterodimerization with SSTR2 increases cell growth inhibition activity of SSTR2. In terms of processing, palmitoylated by ZDHHC5, but not ZDHHC3, nor ZDHHC8. Palmitoylation creates an additional intracellular loop which is thought to be important for efficient coupling to G-proteins and may target the protein to lipid rafts.

Its subcellular location is the cell membrane. Receptor for somatostatin 28 and to a lesser extent for somatostatin-14. The activity of this receptor is mediated by G proteins which inhibit adenylyl cyclase. Increases cell growth inhibition activity of SSTR2 following heterodimerization. The sequence is that of Somatostatin receptor type 5 (SSTR5) from Bos taurus (Bovine).